We begin with the raw amino-acid sequence, 1280 residues long: E3 ubiquitin-protein ligase RKP (1280 aa).

The region spanning lysine 82–phenylalanine 269 is the B30.2/SPRY domain. The helical transmembrane segment at serine 551–leucine 571 threads the bilayer. Positions aspartate 669–phenylalanine 719 are disordered. The chain crosses the membrane as a helical span at residues alanine 834–valine 854. The RING-type zinc-finger motif lies at cysteine 1217–phenylalanine 1252.

The protein localises to the membrane. The catalysed reaction is S-ubiquitinyl-[E2 ubiquitin-conjugating enzyme]-L-cysteine + [acceptor protein]-L-lysine = [E2 ubiquitin-conjugating enzyme]-L-cysteine + N(6)-ubiquitinyl-[acceptor protein]-L-lysine.. Functionally, E3 ubiquitin-protein ligase that promotes the ubiquitination and proteasomal degradation of KRP1 and KRP2. This is E3 ubiquitin-protein ligase RKP (RKP) from Arabidopsis thaliana (Mouse-ear cress).